The sequence spans 298 residues: MDTSEPQESPKSLSNVKHIILILSGKGGVGKSSVTTQTALTLVNKGFNTGVLDIDLTGPSLPRMFGVETKQVHQSSAGWVPVSVYNNGQEKNEENKRGNLSLMSLGFLIGNRNSSVVWRGPKKTAMIRQFLKDVVWSGGENNVPLDYLLIDTPPGTSDEHIAIAEELRWANPDGAIIVTTPQQVATADVRKEINFCKKVNFDVLGVVENMSGFICPHCSECTNIFSSGGGKELSEKLDLQFLGNIPIDPSFVEMVEMQDNDQNDGKKKLVDLYDDCELKGIMEGIVDKVLEQQHPARF.

Residue 25–32 (GKGGVGKS) coordinates ATP. [4Fe-4S] cluster is bound by residues Cys-215 and Cys-218.

The protein belongs to the Mrp/NBP35 ATP-binding proteins family. NUBP2/CFD1 subfamily. In terms of assembly, heterotetramer of 2 NBP35 and 2 CFD1 chains. The cofactor is [4Fe-4S] cluster.

The protein resides in the cytoplasm. In terms of biological role, component of the cytosolic iron-sulfur (Fe/S) protein assembly (CIA) machinery. Required for maturation of extramitochondrial Fe-S proteins. The NBP35-CFD1 heterotetramer forms a Fe-S scaffold complex, mediating the de novo assembly of an Fe-S cluster and its transfer to target apoproteins. Required for biogenesis and export of both ribosomal subunits, which may reflect a role in assembly of the Fe/S clusters in RLI1, a protein which performs rRNA processing and ribosome export. This is Cytosolic Fe-S cluster assembly factor CFD1 from Debaryomyces hansenii (strain ATCC 36239 / CBS 767 / BCRC 21394 / JCM 1990 / NBRC 0083 / IGC 2968) (Yeast).